A 344-amino-acid polypeptide reads, in one-letter code: MSYALLRPFLFNMDPEHAHEMTLSLLDKAHKARVLGLVYGQSMQPTDCMGLQFSNPVGLAAGLDKNGDYIDALAELGFGFIEVGTVTPKPQAGNDRPRLFRLKQADAIINRMGFNNEGVDYLIENVQRCKYKGNIGINIGKNAATPVEKAADDYVYCLERVYPHASYITVNISSPNTANLRDLQSGEALTHLLDAIKNRHSQLATEYGFYVPLVLKVAPDLDPIQVDYISQQLLDFEIDGLIATNTTLSRVGVEDLPDGDQAGGLSGRPVSHISTQILQQFSDQLDGKVALIGVGGIDSGAKAVKKIEAGADMVQLYSGLIYKGPGLVQSCIQSIGGYYDAMEN.

FMN contacts are provided by residues 61-65 (AGLDK) and Thr-85. Substrate is bound at residue Lys-65. 110 to 114 (NRMGF) contacts substrate. The FMN site is built by Asn-138 and Asn-171. Asn-171 provides a ligand contact to substrate. Catalysis depends on Ser-174, which acts as the Nucleophile. A substrate-binding site is contributed by Asn-176. FMN contacts are provided by Lys-216 and Thr-244. 245-246 (NT) is a substrate binding site. FMN is bound by residues Gly-267, Gly-296, and 317–318 (YS).

Belongs to the dihydroorotate dehydrogenase family. Type 2 subfamily. As to quaternary structure, monomer. FMN serves as cofactor.

It is found in the cell membrane. The enzyme catalyses (S)-dihydroorotate + a quinone = orotate + a quinol. It functions in the pathway pyrimidine metabolism; UMP biosynthesis via de novo pathway; orotate from (S)-dihydroorotate (quinone route): step 1/1. In terms of biological role, catalyzes the conversion of dihydroorotate to orotate with quinone as electron acceptor. The protein is Dihydroorotate dehydrogenase (quinone) of Psychrobacter cryohalolentis (strain ATCC BAA-1226 / DSM 17306 / VKM B-2378 / K5).